The sequence spans 401 residues: Acetate kinase (401 aa).

Position 7 (asparagine 7) interacts with Mg(2+). Position 14 (lysine 14) interacts with ATP. A substrate-binding site is contributed by arginine 91. The active-site Proton donor/acceptor is the aspartate 148. ATP is bound by residues 208 to 212, 283 to 285, and 331 to 335; these read HLGNG, DFR, and GVGEN. Position 384 (glutamate 384) interacts with Mg(2+).

It belongs to the acetokinase family. As to quaternary structure, homodimer. Requires Mg(2+) as cofactor. The cofactor is Mn(2+).

The protein resides in the cytoplasm. It catalyses the reaction acetate + ATP = acetyl phosphate + ADP. Its pathway is metabolic intermediate biosynthesis; acetyl-CoA biosynthesis; acetyl-CoA from acetate: step 1/2. Its function is as follows. Catalyzes the formation of acetyl phosphate from acetate and ATP. Can also catalyze the reverse reaction. The chain is Acetate kinase from Helicobacter hepaticus (strain ATCC 51449 / 3B1).